A 431-amino-acid polypeptide reads, in one-letter code: tRNA (adenine(37)-N6)-methyltransferase (431 aa).

The 139-residue stretch at 30 to 168 folds into the TsaA-like domain; that stretch reads TEPIGYLESC…YIADYDSPQN (139 aa). S-adenosyl-L-methionine contacts are provided by residues 47 to 49, 90 to 91, R117, L127, and 148 to 151; these read PRQ, HK, and IDGT. Positions 196–242 are disordered; sequence LSGRGKVQPRQSTKERPKCLEDRTSGENSQKSRDMSEIQHTLPEDRE. Residues 207 to 242 are compositionally biased toward basic and acidic residues; the sequence is STKERPKCLEDRTSGENSQKSRDMSEIQHTLPEDRE.

Belongs to the tRNA methyltransferase O family.

The catalysed reaction is N(6)-L-threonylcarbamoyladenosine(37) in tRNA + S-adenosyl-L-methionine = N(6)-methyl,N(6)-L-threonylcarbamoyladenosine(37) in tRNA + S-adenosyl-L-homocysteine + H(+). Functionally, S-adenosyl-L-methionine-dependent methyltransferase responsible for the addition of the methyl group in the formation of N6-methyl-N6-threonylcarbamoyladenosine at position 37 (m(6)t(6)A37) of the tRNA anticodon loop of tRNA(Ser)(GCU). The methyl group of m(6)t(6)A37 may improve the efficiency of the tRNA decoding ability. May bind to tRNA. The polypeptide is tRNA (adenine(37)-N6)-methyltransferase (Mus musculus (Mouse)).